The following is a 142-amino-acid chain: Small ribosomal subunit protein uS12 (142 aa).

It belongs to the universal ribosomal protein uS12 family. As to quaternary structure, part of the 30S ribosomal subunit.

With S4 and S5 plays an important role in translational accuracy. Located at the interface of the 30S and 50S subunits. The polypeptide is Small ribosomal subunit protein uS12 (Methanocorpusculum labreanum (strain ATCC 43576 / DSM 4855 / Z)).